The sequence spans 295 residues: MFLLQGAQMLQMLEKSLRKSLPMSLKVYGTVMHMNHGNPFNLKALVDKWPDFQTVVIRPQEQDMKDDLDHYTNTYHVYSEDLKNCQEFLDLPEVINWKQHLQIQSTQSSLNEVIQNLAATKSFKVKRSKNILYMASETIKELTPSLLDVKNLPVGDGKPKAIDPEMFKLSSVDPSHAAVVNRFWLFGGNERSLRFIERCIQSFPNFCLLGTEGTPVSWSLMDQTGEMRMAGTLPEYRAQGLVTHAIYQQAQCLLKRGFPVYSHVDPKNQIMQKMSQSLNHVPMPSDWNQWNCEPL.

N6-acetyllysine; alternate occurs at positions 15, 126, and 140. An N6-succinyllysine; alternate mark is found at Lys15, Lys126, and Lys140. The residue at position 158 (Lys158) is an N6-acetyllysine. Lys168 is subject to N6-succinyllysine. Lys255 bears the N6-acetyllysine; alternate mark. Lys255 carries the N6-succinyllysine; alternate modification.

It belongs to the glycine N-acyltransferase family. In terms of tissue distribution, detected in liver (at protein level).

The protein resides in the mitochondrion. The enzyme catalyses an acyl-CoA + glycine = an N-acylglycine + CoA + H(+). It catalyses the reaction benzoyl-CoA + glycine = N-benzoylglycine + CoA + H(+). Its function is as follows. Mitochondrial acyltransferase which transfers an acyl group to the N-terminus of glycine and glutamine, although much less efficiently. Can conjugate a multitude of substrates to form a variety of N-acylglycines, thereby detoxify xenobiotics, such as benzoic acid or salicylic acid, and endogenous organic acids, such as isovaleric acid. This Bos taurus (Bovine) protein is Glycine N-acyltransferase (GLYAT).